We begin with the raw amino-acid sequence, 356 residues long: MSIVTITDLARENVRNLTPYQSARRLGGNGDVWLNANEYPTAVEFQLTQQTLNRYPECQPKAVIENYAQYAGVKPEQVLVSRGADEGIELLIRAFCEPGKDAILYCPPTYGMYGVSAETIGVECRTVPTLDNWQLDLQGISDKLEGVKVVYVCSPNNPTGQLINPQDFRTLLELTRGKAIVVADEAYIEFCPQASLAGWLAEYPHLAILRTLSKAFALAGLRCGFTLANEEVINLLMKVIAPYPLSTPVADIAAQALSPQGIVAMRERVAQIIAERECLIAALKEIPCVEQVFDSETNYILARFKASSAVFKSLWDQGIILRDQNKQPSLSGCLRITVGTREESQRVIDALRAEQV.

Position 214 is an N6-(pyridoxal phosphate)lysine (Lys214).

Belongs to the class-II pyridoxal-phosphate-dependent aminotransferase family. Histidinol-phosphate aminotransferase subfamily. In terms of assembly, homodimer. Pyridoxal 5'-phosphate serves as cofactor.

It catalyses the reaction L-histidinol phosphate + 2-oxoglutarate = 3-(imidazol-4-yl)-2-oxopropyl phosphate + L-glutamate. It functions in the pathway amino-acid biosynthesis; L-histidine biosynthesis; L-histidine from 5-phospho-alpha-D-ribose 1-diphosphate: step 7/9. In Shigella boydii serotype 4 (strain Sb227), this protein is Histidinol-phosphate aminotransferase.